The sequence spans 316 residues: Protease HtpX homolog (316 aa).

Residues 16–36 traverse the membrane as a helical segment; the sequence is LFMGAGFLIGGATGMMIALVF. Residue H134 coordinates Zn(2+). Residue E135 is part of the active site. H138 is a Zn(2+) binding site. Helical transmembrane passes span 149–169 and 180–200; these read VTAT…FFGG and LGGM…AMLV. E209 contacts Zn(2+). Positions 295–316 are disordered; it reads PVMAATTSSSVPLSGERGGPWS.

The protein belongs to the peptidase M48B family. Zn(2+) serves as cofactor.

The protein localises to the cell inner membrane. In Caulobacter vibrioides (strain ATCC 19089 / CIP 103742 / CB 15) (Caulobacter crescentus), this protein is Protease HtpX homolog.